The following is a 208-amino-acid chain: Large ribosomal subunit protein uL4 (208 aa).

Positions His-49–Thr-78 are disordered. Residues Gly-69–Thr-78 are compositionally biased toward polar residues.

It belongs to the universal ribosomal protein uL4 family. As to quaternary structure, part of the 50S ribosomal subunit.

Functionally, one of the primary rRNA binding proteins, this protein initially binds near the 5'-end of the 23S rRNA. It is important during the early stages of 50S assembly. It makes multiple contacts with different domains of the 23S rRNA in the assembled 50S subunit and ribosome. In terms of biological role, forms part of the polypeptide exit tunnel. The polypeptide is Large ribosomal subunit protein uL4 (Chlorobaculum tepidum (strain ATCC 49652 / DSM 12025 / NBRC 103806 / TLS) (Chlorobium tepidum)).